The chain runs to 577 residues: Putative laccase-1 (577 aa).

The N-terminal stretch at 1–28 (MGTAKIPALLWFLLAGLVLALAVNPAHG) is a signal peptide. Plastocyanin-like domains are found at residues 37–153 (FITE…PKRG) and 163–316 (KEIP…YTDS). Asparagine 42 and asparagine 83 each carry an N-linked (GlcNAc...) asparagine glycan. Cu cation contacts are provided by histidine 87 and histidine 89. N-linked (GlcNAc...) asparagine glycosylation is present at asparagine 115. Histidine 132 and histidine 134 together coordinate Cu cation. N-linked (GlcNAc...) asparagine glycosylation is found at asparagine 276, asparagine 304, asparagine 382, and asparagine 402. A Plastocyanin-like 3 domain is found at 442-561 (DINGGGPLLT…DTMFIVKDGK (120 aa)). 8 residues coordinate Cu cation: histidine 478, histidine 481, histidine 483, histidine 540, cysteine 541, histidine 542, histidine 546, and methionine 551.

It belongs to the multicopper oxidase family. Cu cation is required as a cofactor.

The protein localises to the secreted. The protein resides in the extracellular space. It localises to the apoplast. The enzyme catalyses 4 hydroquinone + O2 = 4 benzosemiquinone + 2 H2O. Functionally, lignin degradation and detoxification of lignin-derived products. This Oryza sativa subsp. japonica (Rice) protein is Putative laccase-1 (LAC1).